Reading from the N-terminus, the 693-residue chain is Putative transmembrane protein ORF68 (693 aa).

The first 17 residues, 1-17 (MILTIILYTLLFSTCSA), serve as a signal peptide directing secretion. The Extracellular segment spans residues 18-666 (QSVHTMPEAV…WLTKFGTGGG (649 aa)). Positions 208–256 (SKAANNRMDALEDGMKNINTRVTETNLLLEKLSTEVTGALTQLENEIKM) form a coiled coil. The chain crosses the membrane as a helical span at residues 667–687 (IAGVTIGLLLPILAIVFSCYV). The Cytoplasmic segment spans residues 688-693 (FCKRRV).

Its subcellular location is the host membrane. The protein is Putative transmembrane protein ORF68 of Magallana gigas (Pacific oyster).